Consider the following 505-residue polypeptide: Phosphomevalonate kinase, peroxisomal (505 aa).

Residue Ala2 is modified to N-acetylalanine. Positions 57 to 65 match the Peroxisomal targeting signal PTS2 motif; the sequence is DVKLTSPQL. 177-187 serves as a coordination point for ATP; the sequence is VAKTGLGSSAA.

It belongs to the GHMP kinase family. Mevalonate kinase subfamily.

It localises to the peroxisome. The enzyme catalyses (R)-5-phosphomevalonate + ATP = (R)-5-diphosphomevalonate + ADP. It functions in the pathway isoprenoid biosynthesis; isopentenyl diphosphate biosynthesis via mevalonate pathway; isopentenyl diphosphate from (R)-mevalonate: step 2/3. This chain is Phosphomevalonate kinase, peroxisomal, found in Arabidopsis thaliana (Mouse-ear cress).